The sequence spans 182 residues: ATP synthase subunit delta (182 aa).

Belongs to the ATPase delta chain family. As to quaternary structure, F-type ATPases have 2 components, F(1) - the catalytic core - and F(0) - the membrane proton channel. F(1) has five subunits: alpha(3), beta(3), gamma(1), delta(1), epsilon(1). F(0) has three main subunits: a(1), b(2) and c(10-14). The alpha and beta chains form an alternating ring which encloses part of the gamma chain. F(1) is attached to F(0) by a central stalk formed by the gamma and epsilon chains, while a peripheral stalk is formed by the delta and b chains.

It is found in the cell membrane. F(1)F(0) ATP synthase produces ATP from ADP in the presence of a proton or sodium gradient. F-type ATPases consist of two structural domains, F(1) containing the extramembraneous catalytic core and F(0) containing the membrane proton channel, linked together by a central stalk and a peripheral stalk. During catalysis, ATP synthesis in the catalytic domain of F(1) is coupled via a rotary mechanism of the central stalk subunits to proton translocation. In terms of biological role, this protein is part of the stalk that links CF(0) to CF(1). It either transmits conformational changes from CF(0) to CF(1) or is implicated in proton conduction. The sequence is that of ATP synthase subunit delta from Desulforudis audaxviator (strain MP104C).